The following is a 594-amino-acid chain: Putative aldehyde oxidase Art an 7 (594 aa).

Residues 1 to 23 form the signal peptide; it reads MASSIKTVILFLLPLLLAYSVLA. Residues 28 to 56 are disordered; sequence TDGGDKPGPEIDDGGGDKPVPGNNDGASD.

The N-terminus is blocked. In terms of processing, glycosylated. In terms of tissue distribution, expressed in pollen (at protein level).

It is found in the cytoplasm. It catalyses the reaction an aldehyde + O2 + H2O = a carboxylate + H2O2 + H(+). Functionally, catalyzes the oxidation of aldehydes to the corresponding carboxylate by coupling the reaction to the reduction of dioxygen to hydrogen peroxide. Substrates include glyoxal and other aldehydes. Does not have enzymatic activity on D-galactose. This chain is Putative aldehyde oxidase Art an 7, found in Artemisia annua (Sweet wormwood).